The sequence spans 160 residues: 2-C-methyl-D-erythritol 2,4-cyclodiphosphate synthase (160 aa).

A divalent metal cation is bound by residues D12 and H14. 4-CDP-2-C-methyl-D-erythritol 2-phosphate contacts are provided by residues 12–14 (DVH) and 38–39 (HS). A divalent metal cation is bound at residue H46. Residues 60-62 (DIG), 65-69 (FPDTD), 136-139 (TTTE), F143, and R146 each bind 4-CDP-2-C-methyl-D-erythritol 2-phosphate.

This sequence belongs to the IspF family. Homotrimer. It depends on a divalent metal cation as a cofactor.

The catalysed reaction is 4-CDP-2-C-methyl-D-erythritol 2-phosphate = 2-C-methyl-D-erythritol 2,4-cyclic diphosphate + CMP. It participates in isoprenoid biosynthesis; isopentenyl diphosphate biosynthesis via DXP pathway; isopentenyl diphosphate from 1-deoxy-D-xylulose 5-phosphate: step 4/6. Its function is as follows. Involved in the biosynthesis of isopentenyl diphosphate (IPP) and dimethylallyl diphosphate (DMAPP), two major building blocks of isoprenoid compounds. Catalyzes the conversion of 4-diphosphocytidyl-2-C-methyl-D-erythritol 2-phosphate (CDP-ME2P) to 2-C-methyl-D-erythritol 2,4-cyclodiphosphate (ME-CPP) with a corresponding release of cytidine 5-monophosphate (CMP). This Acinetobacter baumannii (strain SDF) protein is 2-C-methyl-D-erythritol 2,4-cyclodiphosphate synthase.